The sequence spans 648 residues: Protein associated with UVRAG as autophagy enhancer (648 aa).

2 stretches are compositionally biased toward polar residues: residues 131 to 146 (QESLLKNPKTVATSPS) and 157 to 173 (PHLTASTDDGDARSSSR). The interval 131 to 173 (QESLLKNPKTVATSPSPKEGSARSESPHLTASTDDGDARSSSR) is disordered. Ser144 bears the Phosphoserine mark. The interaction with UVRAG stretch occupies residues 183-222 (ETFMLPADVEKENLHFYAADIIISVIENMKCNLPNQQQPE). N6-acetyllysine occurs at positions 469, 509, 519, 559, and 619.

Interacts with UVRAG; the interaction is direct and promotes association with the PI3K/PI3KC3 and HOPS complexes. Interacts with STX17. In terms of processing, phosphorylated by MTOR at Ser-144 under nutrient-rich conditions. Phosphorylation prevents acetylation by KAT5/TIP60 and impairs RUBCNL/PACER function and autophagosome maturation. Under autophagy induction, Phosphorylation by MTOR is repressed, enabling acetylation by KAT5/TIP60. Post-translationally, acetylated by KAT5/TIP60 under autophagy induction, promoting autophagosome maturation and lipid metabolism. Acetylation is prevented by phosphorylation by MTOR. Lys-469 and Lys-559 constitute the key sites for tuning function in autophagy.

It is found in the cytoplasmic vesicle. It localises to the autophagosome membrane. In terms of biological role, regulator of autophagy that promotes autophagosome maturation by facilitating the biogenesis of phosphatidylinositol 3-phosphate (PtdIns(3)P) in late steps of autophagy. Acts by antagonizing RUBCN, thereby stimulating phosphatidylinositol 3-kinase activity of the PI3K/PI3KC3 complex. Following anchorage to the autophagosomal SNARE STX17, promotes the recruitment of PI3K/PI3KC3 and HOPS complexes to the autophagosome to regulate the fusion specificity of autophagosomes with late endosomes/lysosomes. Binds phosphoinositides phosphatidylinositol 3-phosphate (PtdIns(3)P), 4-phosphate (PtdIns(4)P) and 5-phosphate (PtdIns(5)P). In addition to its role in autophagy, acts as a regulator of lipid and glycogen homeostasis. May act as a tumor suppressor. In Mus musculus (Mouse), this protein is Protein associated with UVRAG as autophagy enhancer.